A 214-amino-acid chain; its full sequence is SH3 domain-binding glutamic acid-rich protein (214 aa).

Residues 61–67 (NGIPLPP) carry the SH3-binding motif. Residues 101–214 (PGSKVTKSEE…EEEAGEGEDS (114 aa)) are disordered. A compositionally biased stretch (basic and acidic residues) spans 129 to 144 (GTEKAEKSGENEAQKE). Acidic residues-rich tracts occupy residues 162 to 192 (EGEDGEEGEEGEEREEGGEGETTGETEEAPE) and 198 to 214 (EAEEEEPEEEAGEGEDS).

It belongs to the SH3BGR family.

This Mus musculus (Mouse) protein is SH3 domain-binding glutamic acid-rich protein (Sh3bgr).